The chain runs to 151 residues: Acidic phospholipase A2 6 (151 aa).

An N-terminal signal peptide occupies residues 1-27; sequence MYPAHLLVLLAVCVSLLGAASIPARPL. Cystine bridges form between C38–C104, C54–C151, C56–C72, C71–C132, C78–C125, C88–C118, and C111–C123. Ca(2+)-binding residues include Y55, G57, and G59. H75 is a catalytic residue. D76 contacts Ca(2+). Residue D126 is part of the active site.

Belongs to the phospholipase A2 family. Group I subfamily. D49 sub-subfamily. Requires Ca(2+) as cofactor. In terms of tissue distribution, expressed by the venom gland.

The protein resides in the secreted. It carries out the reaction a 1,2-diacyl-sn-glycero-3-phosphocholine + H2O = a 1-acyl-sn-glycero-3-phosphocholine + a fatty acid + H(+). PLA2 catalyzes the calcium-dependent hydrolysis of the 2-acyl groups in 3-sn-phosphoglycerides. The protein is Acidic phospholipase A2 6 of Tropidechis carinatus (Australian rough-scaled snake).